A 211-amino-acid polypeptide reads, in one-letter code: Large ribosomal subunit protein uL3 (211 aa).

The protein belongs to the universal ribosomal protein uL3 family. In terms of assembly, part of the 50S ribosomal subunit. Forms a cluster with proteins L14 and L19.

In terms of biological role, one of the primary rRNA binding proteins, it binds directly near the 3'-end of the 23S rRNA, where it nucleates assembly of the 50S subunit. This is Large ribosomal subunit protein uL3 from Desulfatibacillum aliphaticivorans.